The sequence spans 150 residues: UPF0178 protein Reut_B5138 (150 aa).

The protein belongs to the UPF0178 family.

The chain is UPF0178 protein Reut_B5138 from Cupriavidus pinatubonensis (strain JMP 134 / LMG 1197) (Cupriavidus necator (strain JMP 134)).